A 447-amino-acid chain; its full sequence is MDQTCSLESFLNHVQKRDPHQTEFAQAVREVMTTLWPFLEQNPRYRHMSLLERLVEPERVIQFRVVWLDDKNQVQVNRAWRVQFNSAIGPYKGGMRFHPSVNLSILKFLGFEQTFKNALTTLPMGGGKGGSDFDPKGKSEGEVMRFCQALMTELYRHLGPDTDVPAGDIGVGGREVGFMAGMMRKLSNNSACVFTGKGLSFGGSLIRPEATGYGLVYFTEAMLKRHGLGFEGMRVAVSGSGNVAQYAIEKAMAFGARVVTASDSSGTVVDESGFTPEKLARLCEIKASRDGRVADYAREFGLTYLEGQQPWSVPVDIALPCATQNELDVDAARVLIANGVKAVAEGANMPTTIEATDLFLEAGVLFAPGKAANAGGVATSGLEMAQNAARLSWKAEKVDARLHHIMLDIHHACVKYGGDNKHTNYVQGANIAGFVKVADAMLAQGVI.

The substrate site is built by Lys92, Gln113, and Lys116. The Proton donor role is filled by Lys128. Residue Gly167 coordinates substrate. NADP(+) contacts are provided by Thr211 and Asn242. Ser380 provides a ligand contact to substrate.

It belongs to the Glu/Leu/Phe/Val dehydrogenases family. In terms of assembly, homohexamer.

It catalyses the reaction L-glutamate + NADP(+) + H2O = 2-oxoglutarate + NH4(+) + NADPH + H(+). Catalyzes the reversible oxidative deamination of glutamate to alpha-ketoglutarate and ammonia. This Salmonella typhi protein is NADP-specific glutamate dehydrogenase (gdhA).